The chain runs to 150 residues: U1 small nuclear ribonucleoprotein C (150 aa).

The Matrin-type zinc finger occupies tyrosine 4–aspartate 36. Residues serine 66–tyrosine 132 form a disordered region. Over residues aspartate 80–lysine 92 the composition is skewed to basic and acidic residues. Acidic residues predominate over residues asparagine 103–methionine 112. The segment covering leucine 115 to alanine 130 has biased composition (pro residues).

The protein belongs to the U1 small nuclear ribonucleoprotein C family. As to quaternary structure, U1 snRNP is composed of the 7 core Sm proteins B/B', D1, D2, D3, E, F and G that assemble in a heptameric protein ring on the Sm site of the small nuclear RNA to form the core snRNP, and at least 3 U1 snRNP-specific proteins U1-70K, U1-A and U1-C. U1-C interacts with U1 snRNA and the 5' splice-site region of the pre-mRNA.

It localises to the nucleus. In terms of biological role, component of the spliceosomal U1 snRNP, which is essential for recognition of the pre-mRNA 5' splice-site and the subsequent assembly of the spliceosome. U1-C is directly involved in initial 5' splice-site recognition for both constitutive and regulated alternative splicing. The interaction with the 5' splice-site seems to precede base-pairing between the pre-mRNA and the U1 snRNA. Stimulates commitment or early (E) complex formation by stabilizing the base pairing of the 5' end of the U1 snRNA and the 5' splice-site region. In Candida albicans (strain SC5314 / ATCC MYA-2876) (Yeast), this protein is U1 small nuclear ribonucleoprotein C.